The chain runs to 78 residues: Large ribosomal subunit protein uL29 (78 aa).

The protein belongs to the universal ribosomal protein uL29 family.

The sequence is that of Large ribosomal subunit protein uL29 from Rippkaea orientalis (strain PCC 8801 / RF-1) (Cyanothece sp. (strain PCC 8801)).